The sequence spans 264 residues: MKQYLDLMRKVLAEGTPKADRTGTGTLSIFGHQMRFNLQQGFPLVTTKKCHLRSIIHELLWFLNGETNVSYLHENNVTIWDEWADDNGDLGPVYGKQWRAWGCADGRQVDQISQVMEQLRQEPDSRRIIVSAWNVGELDQMALAPCHAFFQFYVADGRLSCQLYQRSCDVFLGLPFNIASYALLVHMMAQQLDLQVGDFVWTGGDTHLYSNHMEQTALQLTREPRALPRLVLARRPASIFDYRFEDFIIEGYDPHPAIKAPVAV.

Arginine 21 is a dUMP binding site. (6R)-5,10-methylene-5,6,7,8-tetrahydrofolate is bound at residue histidine 51. A dUMP-binding site is contributed by 126 to 127 (RR). Cysteine 146 functions as the Nucleophile in the catalytic mechanism. Residues 166–169 (RSCD), asparagine 177, and 207–209 (HLY) contribute to the dUMP site. Aspartate 169 provides a ligand contact to (6R)-5,10-methylene-5,6,7,8-tetrahydrofolate. Alanine 263 contributes to the (6R)-5,10-methylene-5,6,7,8-tetrahydrofolate binding site.

Belongs to the thymidylate synthase family. Bacterial-type ThyA subfamily. As to quaternary structure, homodimer.

It is found in the cytoplasm. The catalysed reaction is dUMP + (6R)-5,10-methylene-5,6,7,8-tetrahydrofolate = 7,8-dihydrofolate + dTMP. It participates in pyrimidine metabolism; dTTP biosynthesis. In terms of biological role, catalyzes the reductive methylation of 2'-deoxyuridine-5'-monophosphate (dUMP) to 2'-deoxythymidine-5'-monophosphate (dTMP) while utilizing 5,10-methylenetetrahydrofolate (mTHF) as the methyl donor and reductant in the reaction, yielding dihydrofolate (DHF) as a by-product. This enzymatic reaction provides an intracellular de novo source of dTMP, an essential precursor for DNA biosynthesis. This chain is Thymidylate synthase, found in Edwardsiella ictaluri (strain 93-146).